The chain runs to 333 residues: Phosphoribosylformylglycinamidine cyclo-ligase (333 aa).

Belongs to the AIR synthase family.

It localises to the cytoplasm. It carries out the reaction 2-formamido-N(1)-(5-O-phospho-beta-D-ribosyl)acetamidine + ATP = 5-amino-1-(5-phospho-beta-D-ribosyl)imidazole + ADP + phosphate + H(+). The protein operates within purine metabolism; IMP biosynthesis via de novo pathway; 5-amino-1-(5-phospho-D-ribosyl)imidazole from N(2)-formyl-N(1)-(5-phospho-D-ribosyl)glycinamide: step 2/2. The chain is Phosphoribosylformylglycinamidine cyclo-ligase from Methanosarcina mazei (strain ATCC BAA-159 / DSM 3647 / Goe1 / Go1 / JCM 11833 / OCM 88) (Methanosarcina frisia).